Reading from the N-terminus, the 105-residue chain is uncharacterized protein (105 aa).

This is an uncharacterized protein from Mycobacterium bovis (strain ATCC BAA-935 / AF2122/97).